A 78-amino-acid chain; its full sequence is WAP four-disulfide core domain protein 12 (78 aa).

An N-terminal signal peptide occupies residues 1–21 (MWPNSILVLTVLLISSTLVTG). Residues 25-72 (KGAEKGVCPPDNVRCIRGEDPQCHNDNDCKDQKICCYWHCGFKCVQPV) enclose the WAP domain. 4 cysteine pairs are disulfide-bonded: C32–C60, C39–C64, C47–C59, and C53–C68.

Its subcellular location is the secreted. Functionally, antibacterial protein. Putative acid-stable proteinase inhibitor. In Rattus norvegicus (Rat), this protein is WAP four-disulfide core domain protein 12.